Reading from the N-terminus, the 195-residue chain is Peptidyl-tRNA hydrolase (195 aa).

Position 18 (Y18) interacts with tRNA. The Proton acceptor role is filled by H23. F69, N71, and N117 together coordinate tRNA.

This sequence belongs to the PTH family. As to quaternary structure, monomer.

It localises to the cytoplasm. The enzyme catalyses an N-acyl-L-alpha-aminoacyl-tRNA + H2O = an N-acyl-L-amino acid + a tRNA + H(+). Hydrolyzes ribosome-free peptidyl-tRNAs (with 1 or more amino acids incorporated), which drop off the ribosome during protein synthesis, or as a result of ribosome stalling. In terms of biological role, catalyzes the release of premature peptidyl moieties from peptidyl-tRNA molecules trapped in stalled 50S ribosomal subunits, and thus maintains levels of free tRNAs and 50S ribosomes. In Hahella chejuensis (strain KCTC 2396), this protein is Peptidyl-tRNA hydrolase.